Reading from the N-terminus, the 102-residue chain is Small ribosomal subunit protein uS10 (102 aa).

The protein belongs to the universal ribosomal protein uS10 family. In terms of assembly, part of the 30S ribosomal subunit.

In terms of biological role, involved in the binding of tRNA to the ribosomes. This chain is Small ribosomal subunit protein uS10, found in Thermosipho melanesiensis (strain DSM 12029 / CIP 104789 / BI429).